The chain runs to 251 residues: Imidazole glycerol phosphate synthase subunit HisF (251 aa).

Residues D11 and D130 contribute to the active site.

This sequence belongs to the HisA/HisF family. Heterodimer of HisH and HisF.

It localises to the cytoplasm. It catalyses the reaction 5-[(5-phospho-1-deoxy-D-ribulos-1-ylimino)methylamino]-1-(5-phospho-beta-D-ribosyl)imidazole-4-carboxamide + L-glutamine = D-erythro-1-(imidazol-4-yl)glycerol 3-phosphate + 5-amino-1-(5-phospho-beta-D-ribosyl)imidazole-4-carboxamide + L-glutamate + H(+). It participates in amino-acid biosynthesis; L-histidine biosynthesis; L-histidine from 5-phospho-alpha-D-ribose 1-diphosphate: step 5/9. IGPS catalyzes the conversion of PRFAR and glutamine to IGP, AICAR and glutamate. The HisF subunit catalyzes the cyclization activity that produces IGP and AICAR from PRFAR using the ammonia provided by the HisH subunit. The chain is Imidazole glycerol phosphate synthase subunit HisF from Bacteroides thetaiotaomicron (strain ATCC 29148 / DSM 2079 / JCM 5827 / CCUG 10774 / NCTC 10582 / VPI-5482 / E50).